The primary structure comprises 452 residues: Probable ECA polymerase (452 aa).

11 consecutive transmembrane segments (helical) span residues 6-26 (FSGL…LTWF), 37-57 (VFFS…TSVL), 63-83 (VGVA…CFYG), 118-138 (VILM…NGFL), 155-175 (GVAL…VYFL), 181-201 (AWLF…MIVG), 207-227 (IIIA…ISLW), 228-248 (MLAA…LKRY), 341-361 (LVVM…GLII), 378-398 (YKAA…IVLA), and 410-430 (VFFL…FWLF).

It belongs to the WzyE family. In terms of assembly, probably part of a complex composed of WzxE, WzyE and WzzE.

It localises to the cell inner membrane. Its pathway is bacterial outer membrane biogenesis; enterobacterial common antigen biosynthesis. Functionally, probably involved in the polymerization of enterobacterial common antigen (ECA) trisaccharide repeat units. The chain is Probable ECA polymerase from Salmonella heidelberg (strain SL476).